Consider the following 385-residue polypeptide: MKKPIIEFKNVSKVFEDNNTVVLKDINFELEEGKFYTLLGSSGSGKSTILNIIAGLLDATDGDIFLDGVRINDIPTNKRDVHTVFQSYALFPHMNVFENVAFPLRLRKVDKKEIQERVTEVLKMVQLEGFERRSIRKLSGGQRQRVAIARAIINQPRVVLLDEPLSALDLKLRTDMQYELRELQQRLGITFVFVTHDQEEALAMSDWIFVMNDGEIVQSGTPVDIYDEPINHFVATFIGESNILPGKMIEDYLVEFNGKRFEAVDGGMRPNESVEVVIRPEDLRITLPEEGKLQVKVDTQLFRGVHYEIIAYDELGNEWMIHSTRKAIVGEEIGLHFEPEDIHIMRLNETEEEFDARIEEYVEVEEQEAGLINAIEEERDEENNL.

Residues 6–238 (IEFKNVSKVF…PINHFVATFI (233 aa)) form the ABC transporter domain. 40–47 (GSSGSGKS) is an ATP binding site.

It belongs to the ABC transporter superfamily. Spermidine/putrescine importer (TC 3.A.1.11.1) family. As to quaternary structure, the complex is composed of two ATP-binding proteins (PotA), two transmembrane proteins (PotB and PotC) and a solute-binding protein (PotD).

It is found in the cell membrane. It carries out the reaction ATP + H2O + polyamine-[polyamine-binding protein]Side 1 = ADP + phosphate + polyamineSide 2 + [polyamine-binding protein]Side 1.. Its function is as follows. Part of the ABC transporter complex PotABCD involved in spermidine/putrescine import. Responsible for energy coupling to the transport system. This is Spermidine/putrescine import ATP-binding protein PotA from Streptococcus sanguinis (strain SK36).